Here is a 611-residue protein sequence, read N- to C-terminus: Dual specificity protein phosphatase CDC14AB (611 aa).

The tract at residues 23-178 is a; sequence DLLGASEFIK…ALQHGFLNFE (156 aa). Residues 179 to 192 are linker; the sequence is TFDVNEYEHYERVE. The segment at 193–359 is b; that stretch reads NGDLNWITPG…HGDSLRSKQR (167 aa). Residues 194 to 352 form the Tyrosine-protein phosphatase domain; that stretch reads GDLNWITPGK…KQASLWAHGD (159 aa). The active-site Phosphocysteine intermediate is Cys294. Residues 408-611 form a disordered region; the sequence is KLRALKGRRQ…PSLQSEYVQY (204 aa). Low complexity predominate over residues 456-490; the sequence is SPLKSSKVPASSSSSSSSSSVSASAKRIGRSSSSS. Residues 491–511 show a composition bias toward polar residues; sequence TNLKSTRLASSLGNLYEPNTE. The segment covering 512–553 has biased composition (low complexity); the sequence is SISSGKPPSPSSFTPHPVRTTYNYHYEVNNNNNQYSTTSSPS. 2 stretches are compositionally biased toward polar residues: residues 554–569 and 591–611; these read KSLGYNLNHSGPSGAS and GLSTRHLSRSIPSLQSEYVQY.

Belongs to the protein-tyrosine phosphatase family. Non-receptor class CDC14 subfamily.

It localises to the nucleus. Its subcellular location is the cytoplasm. The protein resides in the cytoskeleton. It is found in the microtubule organizing center. The protein localises to the centrosome. It localises to the spindle pole. Its subcellular location is the spindle. The protein resides in the cell projection. It is found in the kinocilium. It catalyses the reaction O-phospho-L-tyrosyl-[protein] + H2O = L-tyrosyl-[protein] + phosphate. The enzyme catalyses O-phospho-L-seryl-[protein] + H2O = L-seryl-[protein] + phosphate. It carries out the reaction O-phospho-L-threonyl-[protein] + H2O = L-threonyl-[protein] + phosphate. In terms of biological role, dual-specificity phosphatase. Required for centrosome separation and productive cytokinesis during cell division. Dephosphorylates SIRT2 around early anaphase. May dephosphorylate the APC subunit FZR1/CDH1, thereby promoting APC-FZR1 dependent degradation of mitotic cyclins and subsequent exit from mitosis. This is Dual specificity protein phosphatase CDC14AB (cdc14ab) from Danio rerio (Zebrafish).